The following is a 316-amino-acid chain: tRNA dimethylallyltransferase (316 aa).

Position 17–24 (17–24) interacts with ATP; that stretch reads GPTASGKT. 19–24 contacts substrate; that stretch reads TASGKT. Interaction with substrate tRNA stretches follow at residues 42–45, 166–170, and 247–252; these read DSAL, QRLSR, and RCVGYR.

The protein belongs to the IPP transferase family. Monomer. Mg(2+) serves as cofactor.

It carries out the reaction adenosine(37) in tRNA + dimethylallyl diphosphate = N(6)-dimethylallyladenosine(37) in tRNA + diphosphate. Catalyzes the transfer of a dimethylallyl group onto the adenine at position 37 in tRNAs that read codons beginning with uridine, leading to the formation of N6-(dimethylallyl)adenosine (i(6)A). This Salmonella newport (strain SL254) protein is tRNA dimethylallyltransferase.